The sequence spans 433 residues: Probable imidazolonepropionase (433 aa).

2 residues coordinate 4-imidazolone-5-propanoate: Tyr-160 and His-193. Tyr-160 provides a ligand contact to N-formimidoyl-L-glutamate. Fe(3+) is bound at residue His-261. Zn(2+) is bound at residue His-261. Glu-264 is a 4-imidazolone-5-propanoate binding site. Asp-335 contributes to the Fe(3+) binding site. Residue Asp-335 coordinates Zn(2+). An N-formimidoyl-L-glutamate-binding site is contributed by Asn-337.

It belongs to the metallo-dependent hydrolases superfamily. HutI family. Requires Zn(2+) as cofactor. Fe(3+) is required as a cofactor.

It catalyses the reaction 4-imidazolone-5-propanoate + H2O = N-formimidoyl-L-glutamate. The protein operates within amino-acid degradation; L-histidine degradation into L-glutamate; N-formimidoyl-L-glutamate from L-histidine: step 3/3. The protein is Probable imidazolonepropionase (amdhd1) of Danio rerio (Zebrafish).